The chain runs to 1341 residues: DNA-directed RNA polymerase subunit beta (1341 aa).

This sequence belongs to the RNA polymerase beta chain family. As to quaternary structure, the RNAP catalytic core consists of 2 alpha, 1 beta, 1 beta' and 1 omega subunit. When a sigma factor is associated with the core the holoenzyme is formed, which can initiate transcription.

It catalyses the reaction RNA(n) + a ribonucleoside 5'-triphosphate = RNA(n+1) + diphosphate. Functionally, DNA-dependent RNA polymerase catalyzes the transcription of DNA into RNA using the four ribonucleoside triphosphates as substrates. The polypeptide is DNA-directed RNA polymerase subunit beta (Vibrio cholerae serotype O1 (strain ATCC 39315 / El Tor Inaba N16961)).